The sequence spans 437 residues: Enolase (437 aa).

Residue Gln-162 participates in (2R)-2-phosphoglycerate binding. Glu-204 functions as the Proton donor in the catalytic mechanism. Mg(2+)-binding residues include Asp-251, Glu-297, and Asp-324. Lys-349, Arg-378, Ser-379, and Lys-400 together coordinate (2R)-2-phosphoglycerate. The Proton acceptor role is filled by Lys-349.

The protein belongs to the enolase family. Mg(2+) serves as cofactor.

It localises to the cytoplasm. It is found in the secreted. The protein resides in the cell surface. The catalysed reaction is (2R)-2-phosphoglycerate = phosphoenolpyruvate + H2O. It participates in carbohydrate degradation; glycolysis; pyruvate from D-glyceraldehyde 3-phosphate: step 4/5. In terms of biological role, catalyzes the reversible conversion of 2-phosphoglycerate (2-PG) into phosphoenolpyruvate (PEP). It is essential for the degradation of carbohydrates via glycolysis. The sequence is that of Enolase from Chlorobium phaeovibrioides (strain DSM 265 / 1930) (Prosthecochloris vibrioformis (strain DSM 265)).